A 154-amino-acid chain; its full sequence is Ribosome maturation factor RimP (154 aa).

The protein belongs to the RimP family.

It is found in the cytoplasm. In terms of biological role, required for maturation of 30S ribosomal subunits. The polypeptide is Ribosome maturation factor RimP (Salmonella agona (strain SL483)).